The following is a 339-amino-acid chain: MPRVYIGRLSYNVREKDIQRFFSGYGRLLEIDLKNGYGFVEFEDSRDADDAVYELNSKELCGERVIVEHARGPRRDRDGYSYGSRSGGGGYSSRRTSGRDKYGPPVRTEYRLIVENLSSRCSWQDLKDFMRQAGEVTYADAHKERTNEGVIEFRSYSDMKRALDKLDGTEINGRNIRLIEDKPRTSHRRSYSGSRSRSRSRRRSRSRSRRSSRSRSRSISKSRSRSRSRSKGRSRSRSKGRKSRSKSKSKPKSDRGSHSHSRSRSKDKYGKSRSRSRSRSPKENGKGDIKSKSRSRSQSRSHSPLPAPPSKARSMSPPPKRASRSRSRSRSRSRSSSRD.

An RRM 1 domain is found at 2–72; sequence PRVYIGRLSY…ERVIVEHARG (71 aa). Phosphoserine is present on residues Ser45, Ser81, and Ser84. The disordered stretch occupies residues 75-103; the sequence is RDRDGYSYGSRSGGGGYSSRRTSGRDKYG. In terms of domain architecture, RRM 2 spans 110–183; sequence YRLIVENLSS…RNIRLIEDKP (74 aa). An N6-acetyllysine modification is found at Lys165. The segment at 176–339 is disordered; it reads IRLIEDKPRT…RSRSRSSSRD (164 aa). Residue Lys182 forms a Glycyl lysine isopeptide (Lys-Gly) (interchain with G-Cter in SUMO2) linkage. Over residues 185-250 the composition is skewed to basic residues; sequence TSHRRSYSGS…RKSRSKSKSK (66 aa). Over residues 280-291 the composition is skewed to basic and acidic residues; that stretch reads SPKENGKGDIKS. Residues Ser297 and Ser299 each carry the phosphoserine modification. Position 303 is a phosphoserine; by DYRK1A (Ser303). 2 positions are modified to phosphoserine: Ser314 and Ser316. Positions 321 to 339 are enriched in basic residues; it reads RASRSRSRSRSRSRSSSRD.

This sequence belongs to the splicing factor SR family. In terms of assembly, binds SREK1/SFRS12. Interacts with DYRK1A. Interacts with RBMY; the interaction inhibits SRSF6 pre-mRNA splicing. Post-translationally, extensively phosphorylated on serine residues in the RS domain. Phosphorylated by DYRK1A, probably in the RS domain. Phosphorylation by DYRK1A modulates alternative splice site selection and inhibits the expression of MAPT/Tau exon 10.

The protein localises to the nucleus. It is found in the nucleus speckle. Its function is as follows. Plays a role in constitutive splicing and modulates the selection of alternative splice sites. Plays a role in the alternative splicing of MAPT/Tau exon 10. Binds to alternative exons of TNC pre-mRNA and promotes the expression of alternatively spliced TNC. Plays a role in wound healing and in the regulation of keratinocyte differentiation and proliferation via its role in alternative splicing. The sequence is that of Serine/arginine-rich splicing factor 6 (Srsf6) from Mus musculus (Mouse).